Consider the following 722-residue polypeptide: PAB1-binding protein 1 (722 aa).

Positions 1-10 (MKGNFRKRDS) are enriched in basic and acidic residues. The interval 1–38 (MKGNFRKRDSSTNSRKGGNSDSNYTNGGVPNQNNSSMF) is disordered. The segment covering 11–38 (STNSRKGGNSDSNYTNGGVPNQNNSSMF) has biased composition (polar residues). A Sm domain is found at 51–107 (RQDYLLANSIGSDVTVTVTSGVKYTGLLVSCNLESTNGIDVVLRFPRVADSGVSDSV). Ser106 is modified (phosphoserine). Phosphothreonine is present on Thr193. The residue at position 215 (Ser215) is a Phosphoserine. Disordered stretches follow at residues 305 to 380 (ALKS…LSSK), 412 to 488 (SSTL…NPHT), and 683 to 722 (GSGP…SGHK). Composition is skewed to low complexity over residues 307 to 316 (KSNSKPNSNK), 338 to 347 (SSSNSNKNEN), 356 to 370 (PAAA…PQKT), and 412 to 421 (SSTLKSNSSL). Residue Lys344 forms a Glycyl lysine isopeptide (Lys-Gly) (interchain with G-Cter in ubiquitin) linkage. Residues 429-455 (TPSAKTVSPTTQISAGKSESRRSGSNI) are compositionally biased toward polar residues. The residue at position 436 (Ser436) is a Phosphoserine. Residues 456–471 (SQGQSSTGHTTRSSTS) are compositionally biased toward low complexity. Basic residues predominate over residues 698–722 (SHGHSRNYHQTSHHGHHNSSTSGHK).

This sequence belongs to the ataxin-2 family. Interacts (via C-terminus) with MKT1 (via C-terminus). Interacts with FIR1, IGO1, LSM12, PBP4 and PAB1.

The protein localises to the cytoplasm. The protein resides in the nucleus. It localises to the mitochondrion. Its function is as follows. Involved in pre-mRNA polyadenylation. May act to repress the ability of PAB1 to negatively regulate polyadenylation. Negative regulator of poly(A) nuclease (PAN) activity. Promotes mating-type switching in mother cells by positively regulating HO mRNA translation. Localizes MKT1 to polysomes. This Saccharomyces cerevisiae (strain ATCC 204508 / S288c) (Baker's yeast) protein is PAB1-binding protein 1 (PBP1).